A 334-amino-acid polypeptide reads, in one-letter code: N-chimaerin (334 aa).

Positions Met-1–Arg-10 are enriched in polar residues. Positions Met-1–Gln-22 are disordered. Residue Thr-67 is modified to Phosphothreonine. The segment at Val-80 to Cys-130 adopts a Phorbol-ester/DAG-type zinc-finger fold. A Rho-GAP domain is found at Cys-143–Phe-334. Thr-215 carries the phosphothreonine modification.

In terms of assembly, interacts with EPHA4; effector of EPHA4 in axon guidance linking EPHA4 activation to RAC1 regulation. In terms of processing, phosphorylated. Phosphorylation is EPHA4 kinase activity-dependent. In terms of tissue distribution, in neurons in brain regions that are involved in learning and memory processes.

Its function is as follows. GTPase-activating protein for p21-rac and a phorbol ester receptor. Involved in the assembly of neuronal locomotor circuits as a direct effector of EPHA4 in axon guidance. The polypeptide is N-chimaerin (Chn1) (Rattus norvegicus (Rat)).